Consider the following 478-residue polypeptide: GTPase Obg (478 aa).

The Obg domain maps to 2-159; it reads TTFVDRVELH…QDIHLELKTV (158 aa). A disordered region spans residues 60–88; the sequence is YHHSPHRKATNGKPGEGGNRSGKDGQDLV. In terms of domain architecture, OBG-type G spans 160–330; it reads ADVALVGYPS…LSFALAELVA (171 aa). GTP-binding positions include 166-173, 191-195, 212-215, 282-285, and 311-313; these read GYPSAGKS, FTTLV, DVPG, NKID, and SAV. Mg(2+)-binding residues include S173 and T193. Residues 348-430 form the OCT domain; sequence PKAVDDAGFT…DNAVVFDWEP (83 aa). The tract at residues 438–478 is disordered; that stretch reads MLGRRGEDHRFEAPRPAAQRRRDRDAERDEAQQEFDGFEPF. Composition is skewed to basic and acidic residues over residues 439–450 and 457–468; these read LGRRGEDHRFEA and RRRDRDAERDEA. Residues 469 to 478 are compositionally biased toward acidic residues; the sequence is QQEFDGFEPF.

This sequence belongs to the TRAFAC class OBG-HflX-like GTPase superfamily. OBG GTPase family. In terms of assembly, monomer. It depends on Mg(2+) as a cofactor.

The protein localises to the cytoplasm. It localises to the cell membrane. In terms of biological role, plays an unknown essential role and a regulatory role in sporulation. Overexpression suppresses sporulation although cell growth rate was not reduced. Impaired differentiation was eliminated by addition of decoyinine, an inhibitor of GMP synthesis. Overexpression has no effect on undecylprodigiosin production, but decreases actinorhodin production. Its function is as follows. An essential GTPase which binds GTP, GDP and possibly (p)ppGpp with moderate affinity, with high nucleotide exchange rates and a fairly low GTP hydrolysis rate. Plays a role in control of the cell cycle, stress response, ribosome biogenesis and in those bacteria that undergo differentiation, in morphogenesis control. The polypeptide is GTPase Obg (Streptomyces coelicolor (strain ATCC BAA-471 / A3(2) / M145)).